The sequence spans 268 residues: D-alanyl-D-alanine carboxypeptidase (268 aa).

Residues 25 to 47 traverse the membrane as a helical segment; the sequence is AFLWAFIISFTVCTLFLGWRLVS. Residues Gln151, 179-181, and Ser186 contribute to the substrate site; that span reads WVA. Zn(2+) is bound by residues His188 and Asp195. The Proton donor/acceptor role is filled by Glu238. Residue His241 coordinates Zn(2+).

Belongs to the peptidase M15B family. As to quaternary structure, monomer. The cofactor is Zn(2+).

It localises to the cell membrane. With respect to regulation, carboxypeptidase activity is insensitive to beta-lactams since it is not affected by penicillin G or ampicillin and is inhibited only by very high concentrations of cefalotin and cefoxitin. In terms of biological role, carboxypeptidase that cleaves the C-terminal D-alanine residue from the peptidoglycan-derived pentapeptide L-Ala-gamma-D-Glu-L-Lys-D-Ala-D-Ala in vitro. Therefore, should contribute in vivo to the hydrolysis of the D-alanyl-D-alanine-containing peptidoglycan precursors. May increase the level of glycopeptide antibiotics resistance by decreasing the availability of D-Ala-D-Ala termini from the cell surface, which constitute the antibiotic target residues. This Enterococcus faecalis (strain ATCC 700802 / V583) protein is D-alanyl-D-alanine carboxypeptidase.